The sequence spans 645 residues: ATP-dependent DNA helicase Rep (645 aa).

The UvrD-like helicase ATP-binding domain maps to 1–280 (MSLNFSQKNA…IKMEHNYRSS (280 aa)). ATP is bound by residues 22-29 (AGAGSGKT) and arginine 278. Positions 281–562 (GRILKAANSL…QLMTLHASKG (282 aa)) constitute a UvrD-like helicase C-terminal domain.

The protein belongs to the helicase family. UvrD subfamily. As to quaternary structure, homodimer.

The enzyme catalyses Couples ATP hydrolysis with the unwinding of duplex DNA by translocating in the 3'-5' direction.. It catalyses the reaction ATP + H2O = ADP + phosphate + H(+). Its function is as follows. Rep helicase is a single-stranded DNA-dependent ATPase involved in DNA replication; it can initiate unwinding at a nick in the DNA. It binds to the single-stranded DNA and acts in a progressive fashion along the DNA in the 3' to 5' direction. The protein is ATP-dependent DNA helicase Rep of Buchnera aphidicola subsp. Acyrthosiphon pisum (strain APS) (Acyrthosiphon pisum symbiotic bacterium).